The following is a 391-amino-acid chain: Processive diacylglycerol beta-glucosyltransferase (391 aa).

It belongs to the glycosyltransferase 28 family. UgtP subfamily.

Its subcellular location is the cell membrane. The catalysed reaction is a 1,2-diacyl-3-O-(beta-D-glucopyranosyl)-sn-glycerol + UDP-alpha-D-glucose = a 1,2-diacyl-3-O-(beta-D-Glc-(1-&gt;6)-beta-D-Glc)-sn-glycerol + UDP + H(+). It carries out the reaction a 1,2-diacyl-sn-glycerol + UDP-alpha-D-glucose = a 1,2-diacyl-3-O-(beta-D-glucopyranosyl)-sn-glycerol + UDP + H(+). Its pathway is glycolipid metabolism; diglucosyl-diacylglycerol biosynthesis. Processive glucosyltransferase involved in the biosynthesis of both the bilayer- and non-bilayer-forming membrane glucolipids. Is able to successively transfer two glucosyl residues to diacylglycerol (DAG), thereby catalyzing the formation of beta-monoglucosyl-DAG (3-O-(beta-D-glucopyranosyl)-1,2-diacyl-sn-glycerol) and beta-diglucosyl-DAG (3-O-(beta-D-glucopyranosyl-beta-(1-&gt;6)-D-glucopyranosyl)-1,2-diacyl-sn-glycerol). Beta-diglucosyl-DAG is the predominant glycolipid found in Bacillales and is also used as a membrane anchor for lipoteichoic acid (LTA). This chain is Processive diacylglycerol beta-glucosyltransferase, found in Staphylococcus aureus (strain Mu3 / ATCC 700698).